A 432-amino-acid chain; its full sequence is Mitochondrial distribution and morphology protein 12 (432 aa).

Positions 1–432 (MSIEVDWRAA…VFPSFWTFLI (432 aa)) constitute an SMP-LTD domain. Disordered regions lie at residues 182 to 273 (WTDP…PRMR) and 354 to 377 (QQEARGQDDRPWSSADPTASPKRQ). The span at 214-234 (TSNPTSRPSTSSTLPSHPSAS) shows a compositional bias: low complexity. 2 stretches are compositionally biased toward basic and acidic residues: residues 243–253 (TGKEHGSLAED) and 355–364 (QEARGQDDRP).

The protein belongs to the MDM12 family. Component of the ER-mitochondria encounter structure (ERMES) or MDM complex, composed of mmm1, mdm10, mdm12 and mdm34. A mmm1 homodimer associates with one molecule of mdm12 on each side in a pairwise head-to-tail manner, and the SMP-LTD domains of mmm1 and mdm12 generate a continuous hydrophobic tunnel for phospholipid trafficking.

It is found in the mitochondrion outer membrane. It localises to the endoplasmic reticulum membrane. Functionally, component of the ERMES/MDM complex, which serves as a molecular tether to connect the endoplasmic reticulum (ER) and mitochondria. Components of this complex are involved in the control of mitochondrial shape and protein biogenesis, and function in nonvesicular lipid trafficking between the ER and mitochondria. Mdm12 is required for the interaction of the ER-resident membrane protein mmm1 and the outer mitochondrial membrane-resident beta-barrel protein mdm10. The mdm12-mmm1 subcomplex functions in the major beta-barrel assembly pathway that is responsible for biogenesis of all mitochondrial outer membrane beta-barrel proteins, and acts in a late step after the SAM complex. The mdm10-mdm12-mmm1 subcomplex further acts in the TOM40-specific pathway after the action of the mdm12-mmm1 complex. Essential for establishing and maintaining the structure of mitochondria and maintenance of mtDNA nucleoids. This is Mitochondrial distribution and morphology protein 12 from Aspergillus oryzae (strain ATCC 42149 / RIB 40) (Yellow koji mold).